The chain runs to 95 residues: Aspartyl/glutamyl-tRNA(Asn/Gln) amidotransferase subunit C (95 aa).

Belongs to the GatC family. Heterotrimer of A, B and C subunits.

It carries out the reaction L-glutamyl-tRNA(Gln) + L-glutamine + ATP + H2O = L-glutaminyl-tRNA(Gln) + L-glutamate + ADP + phosphate + H(+). The catalysed reaction is L-aspartyl-tRNA(Asn) + L-glutamine + ATP + H2O = L-asparaginyl-tRNA(Asn) + L-glutamate + ADP + phosphate + 2 H(+). Functionally, allows the formation of correctly charged Asn-tRNA(Asn) or Gln-tRNA(Gln) through the transamidation of misacylated Asp-tRNA(Asn) or Glu-tRNA(Gln) in organisms which lack either or both of asparaginyl-tRNA or glutaminyl-tRNA synthetases. The reaction takes place in the presence of glutamine and ATP through an activated phospho-Asp-tRNA(Asn) or phospho-Glu-tRNA(Gln). The protein is Aspartyl/glutamyl-tRNA(Asn/Gln) amidotransferase subunit C of Bartonella bacilliformis (strain ATCC 35685 / KC583 / Herrer 020/F12,63).